The following is a 163-amino-acid chain: Phosphopantetheine adenylyltransferase (163 aa).

Thr11 serves as a coordination point for substrate. ATP contacts are provided by residues 11-12 and His19; that span reads TF. The substrate site is built by Lys43, Leu75, and Arg89. Residues 90 to 92, Glu100, and 125 to 131 each bind ATP; these read GLR and YSFISST.

The protein belongs to the bacterial CoaD family. As to quaternary structure, homohexamer. Requires Mg(2+) as cofactor.

The protein resides in the cytoplasm. It catalyses the reaction (R)-4'-phosphopantetheine + ATP + H(+) = 3'-dephospho-CoA + diphosphate. Its pathway is cofactor biosynthesis; coenzyme A biosynthesis; CoA from (R)-pantothenate: step 4/5. Functionally, reversibly transfers an adenylyl group from ATP to 4'-phosphopantetheine, yielding dephospho-CoA (dPCoA) and pyrophosphate. In Acinetobacter baylyi (strain ATCC 33305 / BD413 / ADP1), this protein is Phosphopantetheine adenylyltransferase.